Reading from the N-terminus, the 318-residue chain is Protoheme IX farnesyltransferase (318 aa).

9 helical membrane passes run 29–49, 51–71, 102–122, 123–143, 151–171, 179–199, 219–239, 241–261, and 280–300; these read IIPLLLITTAGSMWIAAQGQV, PVLLLVTMAGGTLAAASAQTI, LIFAIALAVLSFTLLTVFANL, LAASLALSGIIFYVLIYTHWL, IVIGGAAGAIPALVGWAAVTG, LIFAIVFLWTPPHFWALALMI, ATVKQIWYYTLITVAATLLLV, PLHASGIVYAAIAISLGAVFI, and LFLYSISYMMLLCLGMVVDSL.

Belongs to the UbiA prenyltransferase family. Protoheme IX farnesyltransferase subfamily.

The protein localises to the cell inner membrane. It catalyses the reaction heme b + (2E,6E)-farnesyl diphosphate + H2O = Fe(II)-heme o + diphosphate. It participates in porphyrin-containing compound metabolism; heme O biosynthesis; heme O from protoheme: step 1/1. Functionally, converts heme B (protoheme IX) to heme O by substitution of the vinyl group on carbon 2 of heme B porphyrin ring with a hydroxyethyl farnesyl side group. The polypeptide is Protoheme IX farnesyltransferase (Nostoc sp. (strain PCC 7120 / SAG 25.82 / UTEX 2576)).